Reading from the N-terminus, the 994-residue chain is Phosphoenolpyruvate carboxylase (994 aa).

A disordered region spans residues Met-1–Arg-66. 2 stretches are compositionally biased toward low complexity: residues Ala-14–Glu-25 and Ala-41–Ala-54. Catalysis depends on residues His-204 and Lys-646.

The protein belongs to the PEPCase type 1 family. It depends on Mg(2+) as a cofactor.

The catalysed reaction is oxaloacetate + phosphate = phosphoenolpyruvate + hydrogencarbonate. Functionally, forms oxaloacetate, a four-carbon dicarboxylic acid source for the tricarboxylic acid cycle. This Burkholderia mallei (strain NCTC 10247) protein is Phosphoenolpyruvate carboxylase.